Here is a 351-residue protein sequence, read N- to C-terminus: MKIAVALSGGTDSLFALLLLLEQGQDVFGLHARFLPPRADQPSGNPDPAEAIGAMCARLGVDFHAVDLADAFEEAVVAPFIEEYVVGRTPNPCARCNATMKFGLLLDAARALGAARLATGHYVRQLRHPQWGMTLQRGADPAKDQSYFLSLVDRARLEQAVFPLGNWRKEQVKAELVKRNIVPPLPSESQEICFVPGDDYRAFLRDRQVRLPGPGPIVTMRGRKIGSHKGLWQYTEGQRRGLGIAWEEPLYVVSKDMENNVLLVGGREHLAARGCLTEDVNLLVDPADWPAEISVRTRYRQAPQPARVTVGDTGMAVRFREPQTPPARGQVAAVYDAEGHVLAGGVILGPV.

6–13 is a binding site for ATP; the sequence is ALSGGTDS. The active-site Nucleophile is the C96. The cysteines at positions 96 and 193 are disulfide-linked. G120 lines the ATP pocket. The interaction with tRNA stretch occupies residues 143 to 145; it reads KDQ. C193 acts as the Cysteine persulfide intermediate in catalysis. The segment at 298–299 is interaction with tRNA; that stretch reads RY.

Belongs to the MnmA/TRMU family.

The protein resides in the cytoplasm. The enzyme catalyses S-sulfanyl-L-cysteinyl-[protein] + uridine(34) in tRNA + AH2 + ATP = 2-thiouridine(34) in tRNA + L-cysteinyl-[protein] + A + AMP + diphosphate + H(+). In terms of biological role, catalyzes the 2-thiolation of uridine at the wobble position (U34) of tRNA, leading to the formation of s(2)U34. This Nitratidesulfovibrio vulgaris (strain DSM 19637 / Miyazaki F) (Desulfovibrio vulgaris) protein is tRNA-specific 2-thiouridylase MnmA.